We begin with the raw amino-acid sequence, 203 residues long: Glycerol-3-phosphate acyltransferase (203 aa).

The next 6 helical transmembrane spans lie at 5 to 25 (IIYL…LAQI), 58 to 78 (TLAV…ILMA), 87 to 107 (ILWT…YLKF), 118 to 138 (GVLA…WFII), 150 to 170 (LGAM…IPVI), and 176 to 196 (IFII…RLIG).

The protein belongs to the PlsY family. In terms of assembly, probably interacts with PlsX.

The protein localises to the cell inner membrane. It carries out the reaction an acyl phosphate + sn-glycerol 3-phosphate = a 1-acyl-sn-glycero-3-phosphate + phosphate. It participates in lipid metabolism; phospholipid metabolism. In terms of biological role, catalyzes the transfer of an acyl group from acyl-phosphate (acyl-PO(4)) to glycerol-3-phosphate (G3P) to form lysophosphatidic acid (LPA). This enzyme utilizes acyl-phosphate as fatty acyl donor, but not acyl-CoA or acyl-ACP. The polypeptide is Glycerol-3-phosphate acyltransferase (Campylobacter lari (strain RM2100 / D67 / ATCC BAA-1060)).